A 114-amino-acid polypeptide reads, in one-letter code: Ferritin-like protein (114 aa).

Fe cation contacts are provided by Glu-29, Glu-59, and His-62. Residues 86 to 114 (FTDKPITEIEEETSGGSENTGGDLGIRKL) are cargo-loading peptide. Positions 94 to 114 (IEEETSGGSENTGGDLGIRKL) are disordered. The segment covering 103 to 114 (ENTGGDLGIRKL) has biased composition (gly residues).

Belongs to the ferritin-like superfamily. Probably forms a decamer which binds to the pentameric axis of the interior of the protein shell; as the Flp cargo protein is flexible, packing into the shell is not rigid. 3, 4 or 5 cargo decamers bind inside the encapulin nanocompartment. Fe cation is required as a cofactor.

It is found in the encapsulin nanocompartment. Functionally, cargo protein of a type 1 encapsulin nanocompartment. A ferritin-like protein that probably stores iron in the encapsulin nanocompartment. In Thermotoga maritima (strain ATCC 43589 / DSM 3109 / JCM 10099 / NBRC 100826 / MSB8), this protein is Ferritin-like protein.